The chain runs to 198 residues: Tumor necrosis factor receptor superfamily member 22 (198 aa).

The Cytoplasmic portion of the chain corresponds to 1–20; that stretch reads MFGFFCSLVSSLSRWFLWRR. A helical; Signal-anchor for type II membrane protein transmembrane segment spans residues 21–41; it reads LLLLLLLLLLNLPLQVKFAML. The Extracellular portion of the chain corresponds to 42-198; that stretch reads ELHSFKCPAG…SVVVFRIIRR (157 aa). TNFR-Cys repeat units lie at residues 47–82, 84–124, and 125–165; these read KCPA…QGQC, KCHP…DRKC, and QCRT…NTVC. Cystine bridges form between Cys-48–Cys-59, Cys-60–Cys-73, Cys-63–Cys-82, Cys-85–Cys-100, Cys-103–Cys-116, Cys-106–Cys-124, Cys-126–Cys-141, Cys-144–Cys-157, and Cys-147–Cys-165. The N-linked (GlcNAc...) asparagine glycan is linked to Asn-62. Asn-158 is a glycosylation site (N-linked (GlcNAc...) asparagine).

Ubiquitous.

It is found in the cell membrane. Its subcellular location is the secreted. Receptor for the cytotoxic ligand TNFSF10/TRAIL. Lacks a cytoplasmic death domain and hence is not capable of inducing apoptosis. Protects cells against TRAIL mediated apoptosis possibly through ligand competition. Cannot induce the NF-kappa-B pathway. This chain is Tumor necrosis factor receptor superfamily member 22 (Tnfrsf22), found in Mus musculus (Mouse).